The primary structure comprises 335 residues: Stearoyl-CoA desaturase 5 (335 aa).

The Cytoplasmic segment spans residues 1 to 54 (MPGPAVDAEKVPFRSAKEEIRAGVGVEGSEGGGGGGGRERPGARGHRQDIVWRN). Residues 24–44 (VGVEGSEGGGGGGGRERPGAR) are disordered. The span at 25-36 (GVEGSEGGGGGG) shows a compositional bias: gly residues. Residue N54 coordinates substrate. The helical transmembrane segment at 55 to 75 (VFLMSLLHLAAVYSLVLIPKA) threads the bilayer. The Lumenal segment spans residues 76-77 (QP). The chain crosses the membrane as a helical span at residues 78–98 (LTLLWAYFCFLLTALGVTAGA). Positions 99 and 104 each coordinate Fe cation. The Histidine box-1 motif lies at 99 to 104 (HRLWSH). Over 99–198 (HRLWSHRSYK…VVRFQRKYYK (100 aa)) the chain is Cytoplasmic. Substrate is bound by residues N127, R134, and D135. Residues H136, H139, and H140 each coordinate Fe cation. Positions 136 to 140 (HRVHH) match the Histidine box-2 motif. Substrate-binding residues include R167 and K168. The chain crosses the membrane as a helical span at residues 199–219 (ITVVLMCFVVPTLVPWYIWGE). Residues 220 to 227 (SLWNSYFL) lie on the Lumenal side of the membrane. Residues 228–247 (ASILRYTISLNVTWLVNSVA) form a helical membrane-spanning segment. A substrate-binding site is contributed by W241. H248, H277, H280, and H281 together coordinate Fe cation. At 248–335 (HMYGNRPYDK…RKARTGDGSA (88 aa)) the chain is on the cytoplasmic side. The Histidine box-3 motif lies at 277–281 (HNYHH).

This sequence belongs to the fatty acid desaturase type 1 family. In terms of assembly, may self-associate and form homodimers. Requires Fe(2+) as cofactor. In terms of tissue distribution, detected in brain.

The protein localises to the endoplasmic reticulum membrane. It carries out the reaction octadecanoyl-CoA + 2 Fe(II)-[cytochrome b5] + O2 + 2 H(+) = (9Z)-octadecenoyl-CoA + 2 Fe(III)-[cytochrome b5] + 2 H2O. It catalyses the reaction hexadecanoyl-CoA + 2 Fe(II)-[cytochrome b5] + O2 + 2 H(+) = (9Z)-hexadecenoyl-CoA + 2 Fe(III)-[cytochrome b5] + 2 H2O. Its function is as follows. Stearoyl-CoA desaturase that utilizes O(2) and electrons from reduced cytochrome b5 to introduce the first double bond into saturated fatty acyl-CoA substrates. Catalyzes the insertion of a cis double bond at the delta-9 position into fatty acyl-CoA substrates including palmitoyl-CoA and stearoyl-CoA. Gives rise to a mixture of 16:1 and 18:1 unsaturated fatty acids. Involved in neuronal cell proliferation and differentiation through down-regulation of EGFR/AKT/MAPK and Wnt signaling pathways. This chain is Stearoyl-CoA desaturase 5 (SCD5), found in Bos taurus (Bovine).